Here is a 650-residue protein sequence, read N- to C-terminus: MNETNNTSLLPVSSLPSGLLPVGFSCTVEKFSVTVKRYLAEGGFSHVYLVQLVFPGKPPFEAVLKRIFATDAMALRAVHEEVRTMKLVSNQKRCVSYYGSEFFRTSKNQFEVLVLLEYCPCGGLIDFLNTRLQVRLSEQEILKIASDVTEAVAVMHYLKPPLIHRDLKIENVLLAAPNSYKLCDFGSACHPIPGAKTAAEAKQLEYDIEKFTTWQYRCPEMINVHKGFGIDEKSDIWALGVLFYKLCYYTTPFEHQGLAAIMNVSYAFPTFPPYSDRLKRLISTLLQQYPWQRPNIYQTFCEICKMRNVPIHIYDIYNGKNVSSCNPSGSEYLQHASKLENSGIHQSKSSVFPQPASAMKPMASPMLPNVNSMPYLSNGDHNNNGNTSSPVSRFSYGQHTSNVPSTQKLPSNFRVTQGAPPSHTYGPPPPVQPKPKISPTTPRLSTLALADDMFSSTAKETVPTNEAVFTGDVKSFDSQESNIIESEPLSASNASGKPRTSVNRLVDRYNHTSSLNKVAAAPAPVPKPVNLKSVENPQNNISAPTPSSLQSSNAPVGLGEVESKSVPPTNMATERGVVGRRASMSIAVNARRVSKPEKEHTNPNAEQGDVIPEKPMSIKERMNMLMTKTDYEKPKVEGYGRYTDVQQTKK.

The Protein kinase domain maps to 33–315 (VTVKRYLAEG…MRNVPIHIYD (283 aa)). 3 disordered regions span residues 344–442 (IHQS…PTTP), 517–571 (KVAA…PTNM), and 591–616 (RRVS…EKPM). Composition is skewed to polar residues over residues 369–415 (NVNS…NFRV) and 533–554 (SVEN…SSNA).

The chain is Protein kinase domain-containing protein ppk38 (ppk38) from Schizosaccharomyces pombe (strain 972 / ATCC 24843) (Fission yeast).